The sequence spans 602 residues: Spermidine-citrate ligase (602 aa).

Residues Ser286 to Arg288, Lys300, and Arg312 each bind ATP.

It belongs to the IucA/IucC family.

The catalysed reaction is spermidine + citrate + ATP = N(8)-citryl-spermidine + AMP + diphosphate + H(+). Its pathway is siderophore biosynthesis; petrobactin biosynthesis. Functionally, involved in the biosynthesis of petrobactin, a catecholate siderophore that functions in both iron acquisition and virulence. Catalyzes the ATP-dependent condensation of citric acid and spermidine to form N(8)-citryl-spermidine. It can also catalyze the condensation of several di- and triamine analogs of spermidine with citric acid and the condensation of the citric acid analog tricarballylic acid with spermidine. Required for growth in iron-depleted medium and for full virulence in a mouse model of infection. In Bacillus anthracis, this protein is Spermidine-citrate ligase.